Reading from the N-terminus, the 89-residue chain is UPF0297 protein OB2008 (89 aa).

It belongs to the UPF0297 family.

The polypeptide is UPF0297 protein OB2008 (Oceanobacillus iheyensis (strain DSM 14371 / CIP 107618 / JCM 11309 / KCTC 3954 / HTE831)).